The sequence spans 704 residues: Probable serine/threonine-protein kinase WNK1 (704 aa).

The region spanning 27–284 (GRYNDVLGKG…ARELLKDPFL (258 aa)) is the Protein kinase domain. ATP is bound by residues 107–110 (TEMF) and lysine 157. Aspartate 174 serves as the catalytic Proton acceptor. Positions 499–521 (QTDLQDSGGSSDDGGGQTQHVKD) are disordered.

It belongs to the protein kinase superfamily. Ser/Thr protein kinase family. WNK subfamily.

The enzyme catalyses L-seryl-[protein] + ATP = O-phospho-L-seryl-[protein] + ADP + H(+). It carries out the reaction L-threonyl-[protein] + ATP = O-phospho-L-threonyl-[protein] + ADP + H(+). This chain is Probable serine/threonine-protein kinase WNK1 (WNK1), found in Oryza sativa subsp. japonica (Rice).